Here is a 124-residue protein sequence, read N- to C-terminus: Large ribosomal subunit protein bL12 (124 aa).

This sequence belongs to the bacterial ribosomal protein bL12 family. As to quaternary structure, homodimer. Part of the ribosomal stalk of the 50S ribosomal subunit. Forms a multimeric L10(L12)X complex, where L10 forms an elongated spine to which 2 to 4 L12 dimers bind in a sequential fashion. Binds GTP-bound translation factors.

Functionally, forms part of the ribosomal stalk which helps the ribosome interact with GTP-bound translation factors. Is thus essential for accurate translation. In Wolinella succinogenes (strain ATCC 29543 / DSM 1740 / CCUG 13145 / JCM 31913 / LMG 7466 / NCTC 11488 / FDC 602W) (Vibrio succinogenes), this protein is Large ribosomal subunit protein bL12.